A 323-amino-acid polypeptide reads, in one-letter code: MQDTFQRQINYLRIAITDRCNLRCRYCMPATGVPLKGHEDILRLEEIATLARVAAGTGISRIRLTGGEPLVRKNVVTLVRELAAIPGLEEISLTTNGIFLGALAFSLKEAGLKRVNISLDTLKKDRYRYITRRGNITSVWQGIRAALAAGLTPVKLNVVITRGFNDDEILDFARLAREEPLHIRFIELMPIGTAAASGTAYVPAEEIKGRISRVYPLEPFPDLATNGPAANFRLVGGRGSVGFITPMSNHFCSRCNRLRLTADGKLRPCLYWDGEIDIKGPLRAGAPETELAAIFARAVSLKPAEHHMENGWRQPRAMSQIGG.

Residues 4 to 226 (TFQRQINYLR…LEPFPDLATN (223 aa)) form the Radical SAM core domain. Arg13 provides a ligand contact to GTP. [4Fe-4S] cluster contacts are provided by Cys20 and Cys24. Position 26 (Tyr26) interacts with S-adenosyl-L-methionine. Cys27 provides a ligand contact to [4Fe-4S] cluster. Position 63 (Arg63) interacts with GTP. Gly67 contacts S-adenosyl-L-methionine. Thr94 provides a ligand contact to GTP. Ser118 lines the S-adenosyl-L-methionine pocket. Residue Lys155 participates in GTP binding. Met189 serves as a coordination point for S-adenosyl-L-methionine. The [4Fe-4S] cluster site is built by Cys252 and Cys255. 257–259 (RLR) serves as a coordination point for GTP. Position 269 (Cys269) interacts with [4Fe-4S] cluster.

The protein belongs to the radical SAM superfamily. MoaA family. Monomer and homodimer. It depends on [4Fe-4S] cluster as a cofactor.

It carries out the reaction GTP + AH2 + S-adenosyl-L-methionine = (8S)-3',8-cyclo-7,8-dihydroguanosine 5'-triphosphate + 5'-deoxyadenosine + L-methionine + A + H(+). It functions in the pathway cofactor biosynthesis; molybdopterin biosynthesis. Catalyzes the cyclization of GTP to (8S)-3',8-cyclo-7,8-dihydroguanosine 5'-triphosphate. This Moorella thermoacetica (strain ATCC 39073 / JCM 9320) protein is GTP 3',8-cyclase.